A 303-amino-acid chain; its full sequence is Probable phytol kinase, chloroplastic (303 aa).

A chloroplast-targeting transit peptide spans Met1 to Val49. Helical transmembrane passes span Val98 to Thr118, Tyr122 to Thr144, Tyr168 to Val188, Phe227 to Ile247, Ala254 to Thr274, and Val276 to Ser296.

It belongs to the polyprenol kinase family.

It is found in the plastid. Its subcellular location is the chloroplast membrane. It carries out the reaction phytol + CTP = phytyl phosphate + CDP + H(+). It participates in cofactor biosynthesis; tocopherol biosynthesis. Functionally, involved in the activation and reutilization of phytol from chlorophyll degradation in plant metabolism, including tocopherol biosynthesis. Catalyzes the conversion of phytol to phytol monophosphate (PMP). This is Probable phytol kinase, chloroplastic from Zea mays (Maize).